A 126-amino-acid chain; its full sequence is Aspartate 1-decarboxylase (126 aa).

Serine 25 functions as the Schiff-base intermediate with substrate; via pyruvic acid in the catalytic mechanism. Serine 25 carries the pyruvic acid (Ser) modification. Threonine 57 is a substrate binding site. Tyrosine 58 functions as the Proton donor in the catalytic mechanism. Residue glycine 73 to alanine 75 coordinates substrate.

This sequence belongs to the PanD family. In terms of assembly, heterooctamer of four alpha and four beta subunits. Requires pyruvate as cofactor. Is synthesized initially as an inactive proenzyme, which is activated by self-cleavage at a specific serine bond to produce a beta-subunit with a hydroxyl group at its C-terminus and an alpha-subunit with a pyruvoyl group at its N-terminus.

It localises to the cytoplasm. The enzyme catalyses L-aspartate + H(+) = beta-alanine + CO2. Its pathway is cofactor biosynthesis; (R)-pantothenate biosynthesis; beta-alanine from L-aspartate: step 1/1. In terms of biological role, catalyzes the pyruvoyl-dependent decarboxylation of aspartate to produce beta-alanine. In Tolumonas auensis (strain DSM 9187 / NBRC 110442 / TA 4), this protein is Aspartate 1-decarboxylase.